We begin with the raw amino-acid sequence, 185 residues long: Folate transporter FolT (185 aa).

Helical transmembrane passes span 34–54 (LTVGTNVLQVSFAFVTMSLIA), 64–84 (LIAAILDVIGATIINPGAFFV), 114–134 (VAVGLVLLIANIGLNSIWLVM), and 157–177 (LIMFPIQVGISYFLLNNQVIS).

In terms of assembly, in E.coli forms a stable energy-coupling factor (ECF) transporter complex probably composed of a membrane-embedded substrate-binding protein (S component), two ATP-binding proteins (A components) and a transmembrane protein (T component).

It localises to the cell membrane. In terms of biological role, folate-binding protein that interacts with the energy-coupling factor (ECF) ABC-transporter complex. Unlike classic ABC transporters this ECF transporter provides the energy necessary to transport a number of different substrates. The substrates themselves are bound by transmembrane, not extracytoplasmic soluble proteins. Upon coexpression with EcfA1A2T in E.coli allows 5-formyltetrahydrofolate uptake; uptake requires both FolT and EcfA1A2T. The sequence is that of Folate transporter FolT (folT) from Leuconostoc mesenteroides subsp. mesenteroides (strain ATCC 8293 / DSM 20343 / BCRC 11652 / CCM 1803 / JCM 6124 / NCDO 523 / NBRC 100496 / NCIMB 8023 / NCTC 12954 / NRRL B-1118 / 37Y).